A 113-amino-acid chain; its full sequence is MSLRYYIKNILFGLYCTLIYIYLITKNSEGYYFLVSDKMLYAIVISTILCPYSKYAIEYIAFNFIKKDFFERRKNLNNAPVAKLNLFMLYNLLCLVLAIPFGLLGLFISIKNN.

In terms of biological role, this protein is able to protect a cell, which harbors the plasmid ColE1 encoding colicin E1, against colicin E1. The chain is Colicin-E1 immunity protein (imm) from Escherichia coli.